A 129-amino-acid polypeptide reads, in one-letter code: Small ribosomal subunit protein uS11 (129 aa).

It belongs to the universal ribosomal protein uS11 family. As to quaternary structure, part of the 30S ribosomal subunit. Interacts with proteins S7 and S18. Binds to IF-3.

Located on the platform of the 30S subunit, it bridges several disparate RNA helices of the 16S rRNA. Forms part of the Shine-Dalgarno cleft in the 70S ribosome. The polypeptide is Small ribosomal subunit protein uS11 (Marinobacter nauticus (strain ATCC 700491 / DSM 11845 / VT8) (Marinobacter aquaeolei)).